A 109-amino-acid polypeptide reads, in one-letter code: Aquaporin-2 (109 aa).

Over 1-6 the chain is Cytoplasmic; it reads SVAFSR. The helical transmembrane segment at 7–27 threads the bilayer; it reads AVLAEFLATLIFVFFGLGSAL. The Extracellular segment spans residues 28-35; the sequence is SWPQALPS. Residues 36 to 54 traverse the membrane as a helical segment; the sequence is VLQIALAFGLAIGTLVQAL. The Cytoplasmic portion of the chain corresponds to 55-59; it reads GHVSG. An intramembrane region (discontinuously helical) is located at residues 60 to 69; the sequence is AHINPAVTVA. The NPA 1 motif lies at 63–65; it reads NPA. The Cytoplasmic segment spans residues 70-80; that stretch reads CLVGCHVSFLR. A helical membrane pass occupies residues 81-102; it reads AAFYVAAQLLGAVAGAAILHEI. Topologically, residues 103–109 are extracellular; sequence TPPDVRG.

The protein belongs to the MIP/aquaporin (TC 1.A.8) family. In terms of assembly, homotetramer. Serine phosphorylation is necessary and sufficient for expression at the apical membrane. Endocytosis is not phosphorylation-dependent. In terms of processing, N-glycosylated.

It is found in the apical cell membrane. The protein localises to the basolateral cell membrane. It localises to the cell membrane. Its subcellular location is the cytoplasmic vesicle membrane. The protein resides in the golgi apparatus. It is found in the trans-Golgi network membrane. The catalysed reaction is H2O(in) = H2O(out). The enzyme catalyses glycerol(in) = glycerol(out). Its function is as follows. Forms a water-specific channel that provides the plasma membranes of renal collecting duct with high permeability to water, thereby permitting water to move in the direction of an osmotic gradient. Plays an essential role in renal water homeostasis. Could also be permeable to glycerol. The sequence is that of Aquaporin-2 from Dasypus novemcinctus (Nine-banded armadillo).